A 376-amino-acid chain; its full sequence is Lipid-A-disaccharide synthase (376 aa).

Belongs to the LpxB family.

The catalysed reaction is a lipid X + a UDP-2-N,3-O-bis[(3R)-3-hydroxyacyl]-alpha-D-glucosamine = a lipid A disaccharide + UDP + H(+). Its pathway is bacterial outer membrane biogenesis; LPS lipid A biosynthesis. Functionally, condensation of UDP-2,3-diacylglucosamine and 2,3-diacylglucosamine-1-phosphate to form lipid A disaccharide, a precursor of lipid A, a phosphorylated glycolipid that anchors the lipopolysaccharide to the outer membrane of the cell. The protein is Lipid-A-disaccharide synthase of Coxiella burnetii (strain CbuG_Q212) (Coxiella burnetii (strain Q212)).